The primary structure comprises 986 residues: P3N-PIPO polyprotein (986 aa).

Positions 141 to 284 (KLTEGQMNHL…QSILNSMIQF (144 aa)) constitute a Peptidase S30 domain. Active-site for P1 proteinase activity residues include H192, D201, and S235. Positions 334–337 (KITC) match the Involved in interaction with stylet and aphid transmission motif. An Involved in virions binding and aphid transmission motif is present at residues 592–594 (PTK). One can recognise a Peptidase C6 domain in the interval 618-740 (LYIAKQGYCY…ESDIKHYRVG (123 aa)). Residues C626 and H699 each act as for helper component proteinase activity in the active site.

This sequence belongs to the potyviridae P3N-PIPO polyprotein family. In terms of assembly, interacts (via PIPO domain) with host PCaP1 protein; this interaction may help to anchor the movement complex to the plasma membrane from which the complex could move to the plasmodesmata. In terms of processing, potyviral RNA is expressed as two polyproteins which undergo post-translational proteolytic processing. Genome polyprotein is processed by NIa-pro, P1 and HC-pro proteinases resulting in the production of at least ten individual proteins. P3N-PIPO is cleaved by P1 and HC-pro proteinases resulting in the production of three individual proteins. The P1 proteinase and the HC-pro cleave only their respective C-termini autocatalytically.

It is found in the host cell junction. It localises to the host plasmodesma. It catalyses the reaction Hydrolyzes a Gly-|-Gly bond at its own C-terminus, commonly in the sequence -Tyr-Xaa-Val-Gly-|-Gly, in the processing of the potyviral polyprotein.. Required for aphid transmission and also has proteolytic activity. Only cleaves a Gly-Gly dipeptide at its own C-terminus. Interacts with virions and aphid stylets. Acts as a suppressor of RNA-mediated gene silencing, also known as post-transcriptional gene silencing (PTGS), a mechanism of plant viral defense that limits the accumulation of viral RNAs. May have RNA-binding activity. Functionally, allows efficient cell to cell propagation, by bypassing the host cell wall barrier. Transports viral genome to neighboring plant cells directly through plasmosdesmata, without any budding. This Potato virus Y (strain N) (PVY) protein is P3N-PIPO polyprotein.